Reading from the N-terminus, the 840-residue chain is Sorting nexin-25 (840 aa).

Residues 1–164 (MDRVLRDVFD…MLLRQLEYRE (164 aa)) enclose the PXA domain. Positions 287–401 (QFEDIMTNPF…LVSDLYEKLM (115 aa)) constitute an RGS domain. A disordered region spans residues 404 to 437 (EEEEEPDAQLASEKDELGSGGEAGEEAVEGTSGV). Positions 446–494 (IKLRELNEKLEYKRQALSSIQNAPKPDKKIISKLKDEILLIEKECTALQ) form a coiled coil. One can recognise a PX domain in the interval 508–628 (GLWRASITSA…AFLSPSPDYL (121 aa)). Ser665 is subject to Phosphoserine.

This sequence belongs to the sorting nexin family.

The protein resides in the endosome membrane. Functionally, may be involved in several stages of intracellular trafficking. This Mus musculus (Mouse) protein is Sorting nexin-25 (Snx25).